A 444-amino-acid chain; its full sequence is ATP-dependent protease ATPase subunit HslU (444 aa).

Residues Ile-18 and 60–65 (GVGKTE) contribute to the ATP site. The disordered stretch occupies residues 141–161 (DAWGNNEEGNNDSGTRQSFRK). Residues 147 to 157 (EEGNNDSGTRQ) show a composition bias toward polar residues. ATP is bound by residues Asp-257, Glu-322, and Arg-394.

Belongs to the ClpX chaperone family. HslU subfamily. As to quaternary structure, a double ring-shaped homohexamer of HslV is capped on each side by a ring-shaped HslU homohexamer. The assembly of the HslU/HslV complex is dependent on binding of ATP.

Its subcellular location is the cytoplasm. In terms of biological role, ATPase subunit of a proteasome-like degradation complex; this subunit has chaperone activity. The binding of ATP and its subsequent hydrolysis by HslU are essential for unfolding of protein substrates subsequently hydrolyzed by HslV. HslU recognizes the N-terminal part of its protein substrates and unfolds these before they are guided to HslV for hydrolysis. The sequence is that of ATP-dependent protease ATPase subunit HslU from Aliivibrio fischeri (strain ATCC 700601 / ES114) (Vibrio fischeri).